The following is a 118-amino-acid chain: Large ribosomal subunit protein bL17 (118 aa).

This sequence belongs to the bacterial ribosomal protein bL17 family. In terms of assembly, part of the 50S ribosomal subunit. Contacts protein L32.

In Thermus thermophilus (strain ATCC BAA-163 / DSM 7039 / HB27), this protein is Large ribosomal subunit protein bL17.